The chain runs to 151 residues: D-ribose pyranase 1 (151 aa).

H20 serves as the catalytic Proton donor. Substrate-binding positions include D28, H98, and 121 to 123; that span reads WGN.

It belongs to the RbsD / FucU family. RbsD subfamily. As to quaternary structure, homodecamer.

It localises to the cytoplasm. The catalysed reaction is beta-D-ribopyranose = beta-D-ribofuranose. Its pathway is carbohydrate metabolism; D-ribose degradation; D-ribose 5-phosphate from beta-D-ribopyranose: step 1/2. Its function is as follows. Catalyzes the interconversion of beta-pyran and beta-furan forms of D-ribose. The polypeptide is D-ribose pyranase 1 (Streptomyces griseus subsp. griseus (strain JCM 4626 / CBS 651.72 / NBRC 13350 / KCC S-0626 / ISP 5235)).